We begin with the raw amino-acid sequence, 291 residues long: Probable S-adenosylmethionine-dependent methyltransferase CRG1 (291 aa).

Belongs to the methyltransferase superfamily.

Its subcellular location is the cytoplasm. Probable S-adenosylmethionine-dependent methyltransferase which mediates cantharidin resistance. The sequence is that of Probable S-adenosylmethionine-dependent methyltransferase CRG1 (CRG1) from Saccharomyces cerevisiae (strain ATCC 204508 / S288c) (Baker's yeast).